The following is a 376-amino-acid chain: Lipoyl synthase, mitochondrial (376 aa).

[4Fe-4S] cluster-binding residues include C103, C108, C114, C134, C138, C141, and S349. The 220-residue stretch at 119–338 (EHGTQTATIM…EDRGNQLGFL (220 aa)) folds into the Radical SAM core domain.

This sequence belongs to the radical SAM superfamily. Lipoyl synthase family. [4Fe-4S] cluster is required as a cofactor.

It localises to the mitochondrion. It catalyses the reaction [[Fe-S] cluster scaffold protein carrying a second [4Fe-4S](2+) cluster] + N(6)-octanoyl-L-lysyl-[protein] + 2 oxidized [2Fe-2S]-[ferredoxin] + 2 S-adenosyl-L-methionine + 4 H(+) = [[Fe-S] cluster scaffold protein] + N(6)-[(R)-dihydrolipoyl]-L-lysyl-[protein] + 4 Fe(3+) + 2 hydrogen sulfide + 2 5'-deoxyadenosine + 2 L-methionine + 2 reduced [2Fe-2S]-[ferredoxin]. It participates in protein modification; protein lipoylation via endogenous pathway; protein N(6)-(lipoyl)lysine from octanoyl-[acyl-carrier-protein]: step 2/2. Catalyzes the radical-mediated insertion of two sulfur atoms into the C-6 and C-8 positions of the octanoyl moiety bound to the lipoyl domains of lipoate-dependent enzymes, thereby converting the octanoylated domains into lipoylated derivatives. This chain is Lipoyl synthase, mitochondrial, found in Drosophila ananassae (Fruit fly).